Here is a 1000-residue protein sequence, read N- to C-terminus: Kinesin-like protein CIN8 (1000 aa).

Positions 1–26 (MPAENQNTGQDRSSNSISKNGNSQVG) are enriched in polar residues. The tract at residues 1 to 28 (MPAENQNTGQDRSSNSISKNGNSQVGCH) is disordered. The Kinesin motor domain maps to 36-477 (NITVAVRCRG…LEYASKAKNI (442 aa)). Residue 128-135 (GMTSTGKT) coordinates ATP. A compositionally biased stretch (low complexity) spans 220–242 (ANNTTSNSASSSRSNSRNSSPRS). Disordered regions lie at residues 220 to 248 (ANNT…DLTP) and 260 to 312 (KSLP…PNDQ). The span at 261–276 (SLPNTIKQQYQQQQAV) shows a compositional bias: polar residues. Over residues 277-301 (NSRNNSSSNSGSTTNNASSNTNTNN) the composition is skewed to low complexity. The segment covering 302–312 (GQRSSMAPNDQ) has biased composition (polar residues). Coiled coils occupy residues 518 to 615 (MSQD…MALH) and 860 to 904 (ISVM…IKNS). The interval 970–1000 (VISPKKHAIEDENKSSENVDNEGSRKMLKIE) is disordered. Ser-972 carries the post-translational modification Phosphoserine. Residues 976-1000 (HAIEDENKSSENVDNEGSRKMLKIE) show a composition bias toward basic and acidic residues.

This sequence belongs to the TRAFAC class myosin-kinesin ATPase superfamily. Kinesin family. BimC subfamily.

It is found in the cytoplasm. It localises to the cytoskeleton. The protein resides in the spindle. Its subcellular location is the mitochondrion. Its function is as follows. Elongates the mitotic spindle by interacting with spindle microtubules to generate an outward force pushing spindle poles apart. Following spindle assembly, CIN8 and KIP1 apparently act to oppose a force, possibly generated by KAR3, that draws separated poles back together. The protein is Kinesin-like protein CIN8 (CIN8) of Saccharomyces cerevisiae (strain ATCC 204508 / S288c) (Baker's yeast).